Consider the following 340-residue polypeptide: Glyceraldehyde-3-phosphate dehydrogenase (340 aa).

NAD(+)-binding positions include 11–12 and Gly111; that span reads SI. A D-glyceraldehyde 3-phosphate-binding site is contributed by 140-142; sequence SCN. The active-site Nucleophile is Cys141. Arg169 is an NAD(+) binding site. A D-glyceraldehyde 3-phosphate-binding site is contributed by 195–196; the sequence is HG. Gln303 provides a ligand contact to NAD(+).

It belongs to the glyceraldehyde-3-phosphate dehydrogenase family. As to quaternary structure, homotetramer.

The protein resides in the cytoplasm. It catalyses the reaction D-glyceraldehyde 3-phosphate + phosphate + NADP(+) = (2R)-3-phospho-glyceroyl phosphate + NADPH + H(+). The enzyme catalyses D-glyceraldehyde 3-phosphate + phosphate + NAD(+) = (2R)-3-phospho-glyceroyl phosphate + NADH + H(+). It functions in the pathway carbohydrate degradation; glycolysis; pyruvate from D-glyceraldehyde 3-phosphate: step 1/5. The chain is Glyceraldehyde-3-phosphate dehydrogenase from Methanococcus vannielii (strain ATCC 35089 / DSM 1224 / JCM 13029 / OCM 148 / SB).